Consider the following 697-residue polypeptide: Glycine--tRNA ligase beta subunit (697 aa).

Belongs to the class-II aminoacyl-tRNA synthetase family. In terms of assembly, tetramer of two alpha and two beta subunits.

The protein resides in the cytoplasm. It catalyses the reaction tRNA(Gly) + glycine + ATP = glycyl-tRNA(Gly) + AMP + diphosphate. This is Glycine--tRNA ligase beta subunit from Ralstonia nicotianae (strain ATCC BAA-1114 / GMI1000) (Ralstonia solanacearum).